Reading from the N-terminus, the 553-residue chain is Phosphomethylpyrimidine synthase (553 aa).

Residues Asn192, Met221, Tyr250, His286, 306–308, 347–350, and Glu386 contribute to the substrate site; these read SRG and DGLR. His390 is a Zn(2+) binding site. Residue Tyr413 coordinates substrate. His454 lines the Zn(2+) pocket. Residues Cys534, Cys537, and Cys542 each contribute to the [4Fe-4S] cluster site.

Belongs to the ThiC family. In terms of assembly, homodimer. [4Fe-4S] cluster serves as cofactor.

It carries out the reaction 5-amino-1-(5-phospho-beta-D-ribosyl)imidazole + S-adenosyl-L-methionine = 4-amino-2-methyl-5-(phosphooxymethyl)pyrimidine + CO + 5'-deoxyadenosine + formate + L-methionine + 3 H(+). It participates in cofactor biosynthesis; thiamine diphosphate biosynthesis. Catalyzes the synthesis of the hydroxymethylpyrimidine phosphate (HMP-P) moiety of thiamine from aminoimidazole ribotide (AIR) in a radical S-adenosyl-L-methionine (SAM)-dependent reaction. This Anaplasma marginale (strain St. Maries) protein is Phosphomethylpyrimidine synthase.